The sequence spans 262 residues: Polyamine aminopropyltransferase (262 aa).

Residues 1-249 (MWITQEITPY…DIHRAAFALP (249 aa)) form the PABS domain. Asparagine 29 serves as a coordination point for S-methyl-5'-thioadenosine. A spermidine-binding site is contributed by aspartate 83. Aspartate 155 serves as the catalytic Proton acceptor.

This sequence belongs to the spermidine/spermine synthase family. In terms of assembly, homodimer or homotetramer.

It is found in the cytoplasm. It catalyses the reaction S-adenosyl 3-(methylsulfanyl)propylamine + putrescine = S-methyl-5'-thioadenosine + spermidine + H(+). It participates in amine and polyamine biosynthesis; spermidine biosynthesis; spermidine from putrescine: step 1/1. Catalyzes the irreversible transfer of a propylamine group from the amino donor S-adenosylmethioninamine (decarboxy-AdoMet) to putrescine (1,4-diaminobutane) to yield spermidine. This chain is Polyamine aminopropyltransferase, found in Helicobacter pylori (strain G27).